The following is a 423-amino-acid chain: Zinc finger and BTB domain-containing protein 6 (423 aa).

The BTB domain maps to 33-97 (CDVSIYINDT…CYTGALEVKR (65 aa)). S201 is subject to Phosphoserine. 4 consecutive C2H2-type zinc fingers follow at residues 300–322 (HQCP…LKMH), 325–347 (FLCL…IRGH), 353–375 (FQCT…LNIH), and 381–404 (YKCH…TSVH).

It localises to the nucleus. May be involved in transcriptional regulation. The sequence is that of Zinc finger and BTB domain-containing protein 6 (Zbtb6) from Mus musculus (Mouse).